An 819-amino-acid chain; its full sequence is Protein EFR3 homolog A (819 aa).

A disordered region spans residues 210–230 (DTDSRTGPPASPTTGDKEENP).

The protein belongs to the EFR3 family. Component of a phosphatidylinositol 4-kinase (PI4K) complex. In terms of processing, palmitoylated at its N-terminus, anchoring the protein to the plasma membrane.

Its subcellular location is the cell membrane. In terms of biological role, component of a complex required to localize phosphatidylinositol 4-kinase (PI4K) to the plasma membrane. The complex acts as a regulator of phosphatidylinositol 4-phosphate (PtdIns(4)P) synthesis. In the complex, efr3a probably acts as the membrane-anchoring component. This chain is Protein EFR3 homolog A (efr3a), found in Xenopus laevis (African clawed frog).